A 476-amino-acid chain; its full sequence is Amidophosphoribosyltransferase (476 aa).

Positions 1–11 (MLAEIKGLNEE) are excised as a propeptide. Cysteine 12 acts as the Nucleophile in catalysis. One can recognise a Glutamine amidotransferase type-2 domain in the interval 12–231 (CGVFGIWGHE…PGEMLIINDE (220 aa)). Cysteine 247 provides a ligand contact to [4Fe-4S] cluster. Residues serine 294, aspartate 356, and aspartate 357 each coordinate Mg(2+). Residues cysteine 393, cysteine 448, and cysteine 451 each coordinate [4Fe-4S] cluster.

This sequence in the C-terminal section; belongs to the purine/pyrimidine phosphoribosyltransferase family. In terms of assembly, homotetramer. Requires Mg(2+) as cofactor. [4Fe-4S] cluster serves as cofactor.

It carries out the reaction 5-phospho-beta-D-ribosylamine + L-glutamate + diphosphate = 5-phospho-alpha-D-ribose 1-diphosphate + L-glutamine + H2O. It participates in purine metabolism; IMP biosynthesis via de novo pathway; N(1)-(5-phospho-D-ribosyl)glycinamide from 5-phospho-alpha-D-ribose 1-diphosphate: step 1/2. With respect to regulation, allosterically regulated; subject to end product regulation by purine nucleotides. Its function is as follows. Catalyzes the formation of phosphoribosylamine from phosphoribosylpyrophosphate (PRPP) and glutamine. In Bacillus subtilis (strain 168), this protein is Amidophosphoribosyltransferase.